The primary structure comprises 73 residues: Translational regulator CsrA (73 aa).

The interval 54 to 73 (ENRAASDSPWSPNSLPQLPV) is disordered. Polar residues predominate over residues 61-73 (SPWSPNSLPQLPV).

This sequence belongs to the CsrA/RsmA family. In terms of assembly, homodimer; the beta-strands of each monomer intercalate to form a hydrophobic core, while the alpha-helices form wings that extend away from the core.

It localises to the cytoplasm. A translational regulator that binds mRNA to regulate translation initiation and/or mRNA stability. Usually binds in the 5'-UTR at or near the Shine-Dalgarno sequence preventing ribosome-binding, thus repressing translation. Its main target seems to be the major flagellin gene, while its function is anatagonized by FliW. The polypeptide is Translational regulator CsrA (Treponema pallidum (strain Nichols)).